The following is a 214-amino-acid chain: Nucleoplasmin-2 (214 aa).

The tract at residues 119–214 is disordered; sequence ERYEASDLTW…ARAKKPGFKK (96 aa). The segment covering 127 to 155 has biased composition (acidic residues); sequence TWEEEEEEEGEEEEEEEEDDEDEDADISL. The tract at residues 129-152 is acidic tract A2; that stretch reads EEEEEEEGEEEEEEEEDDEDEDAD. The short motif at 165-180 is the Bipartite nuclear localization signal element; it reads KRLVPQKQASVAKKKK. Positions 181 to 197 are enriched in basic and acidic residues; it reads LEKEEEEIRASVRDKSP. Over residues 198-214 the composition is skewed to basic residues; sequence VKKAKATARAKKPGFKK.

The protein belongs to the nucleoplasmin family. Homopentamer, when bound to H2A-H2B dimers only. Homodecamer of two stacked pentamers, when bound to H2A-H2B dimers and H3-H4 tetramers simultaneously.

The protein localises to the nucleus. In terms of biological role, core histones chaperone involved in chromatin reprogramming, specially during fertilization and early embryonic development. Probably involved in sperm DNA decondensation during fertilization. The polypeptide is Nucleoplasmin-2 (NPM2) (Homo sapiens (Human)).